The chain runs to 393 residues: Formate-dependent phosphoribosylglycinamide formyltransferase (393 aa).

N(1)-(5-phospho-beta-D-ribosyl)glycinamide is bound by residues 22–23 (EL) and Glu82. ATP is bound by residues Arg114, Lys155, 160-165 (SSGKGQ), 195-198 (EGFV), and Glu203. The region spanning 119-308 (RLAAEELGLP…EFALHARAIL (190 aa)) is the ATP-grasp domain. Glu267 and Glu279 together coordinate Mg(2+). Residues Asp286, Lys356, and 363–364 (RR) contribute to the N(1)-(5-phospho-beta-D-ribosyl)glycinamide site.

Belongs to the PurK/PurT family. Homodimer.

The enzyme catalyses N(1)-(5-phospho-beta-D-ribosyl)glycinamide + formate + ATP = N(2)-formyl-N(1)-(5-phospho-beta-D-ribosyl)glycinamide + ADP + phosphate + H(+). It functions in the pathway purine metabolism; IMP biosynthesis via de novo pathway; N(2)-formyl-N(1)-(5-phospho-D-ribosyl)glycinamide from N(1)-(5-phospho-D-ribosyl)glycinamide (formate route): step 1/1. In terms of biological role, involved in the de novo purine biosynthesis. Catalyzes the transfer of formate to 5-phospho-ribosyl-glycinamide (GAR), producing 5-phospho-ribosyl-N-formylglycinamide (FGAR). Formate is provided by PurU via hydrolysis of 10-formyl-tetrahydrofolate. The polypeptide is Formate-dependent phosphoribosylglycinamide formyltransferase (Nitratidesulfovibrio vulgaris (strain DSM 19637 / Miyazaki F) (Desulfovibrio vulgaris)).